The chain runs to 261 residues: GTP cyclohydrolase FolE2 (261 aa).

This sequence belongs to the GTP cyclohydrolase IV family.

The catalysed reaction is GTP + H2O = 7,8-dihydroneopterin 3'-triphosphate + formate + H(+). Its pathway is cofactor biosynthesis; 7,8-dihydroneopterin triphosphate biosynthesis; 7,8-dihydroneopterin triphosphate from GTP: step 1/1. Functionally, converts GTP to 7,8-dihydroneopterin triphosphate. The chain is GTP cyclohydrolase FolE2 from Herminiimonas arsenicoxydans.